Here is a 246-residue protein sequence, read N- to C-terminus: 2-deoxyglucose-6-phosphate phosphatase 2 (246 aa).

Catalysis depends on Asp83, which acts as the Nucleophile. Asp83 contacts Mg(2+). Substrate is bound by residues Asp83, Glu92, and 146 to 149 (DVKN). A Mg(2+)-binding site is contributed by Asp183.

It belongs to the HAD-like hydrolase superfamily. DOG/GPP family. Mg(2+) serves as cofactor.

It carries out the reaction 2-deoxy-D-glucose 6-phosphate + H2O = 2-deoxy-D-glucose + phosphate. In terms of biological role, phosphatase that is active on 2-deoxy-D-glucose 6-phosphate (2-DOG-6P), but not very active on fructose-1-P. The protein is 2-deoxyglucose-6-phosphate phosphatase 2 of Saccharomyces cerevisiae (strain ATCC 204508 / S288c) (Baker's yeast).